A 530-amino-acid chain; its full sequence is Estrogen receptor beta (530 aa).

Residues 1-148 are modulating; that stretch reads MDIKNSPSSL…GPSSKRDAHF (148 aa). Ser-61 bears the Phosphoserine; alternate mark. The O-linked (GlcNAc) serine; alternate glycan is linked to Ser-61. Phosphoserine; by MAPK is present on residues Ser-87 and Ser-105. 2 NR C4-type zinc fingers span residues 149–169 and 185–209; these read CAVC…CEGC and CPAT…LRKC. Residues 149 to 214 constitute a DNA-binding region (nuclear receptor); sequence CAVCSDYASG…RLRKCYEVGM (66 aa). Residues 264–498 enclose the NR LBD domain; that stretch reads SPEQLVLTLL…DLLLEMMNAH (235 aa). The tract at residues 507-530 is disordered; that stretch reads ITGSECSPAEDSKSTEGSQNPQSP. The span at 521–530 shows a compositional bias: polar residues; that stretch reads TEGSQNPQSP.

It belongs to the nuclear hormone receptor family. NR3 subfamily. As to quaternary structure, binds DNA as a homodimer. Can form a heterodimer with ESR1. Interacts with NCOA1, NCOA3, NCOA5 and NCOA6 coactivators, leading to a strong increase of transcription of target genes. Interacts with UBE1C and AKAP13. Interacts with DNTTIP2. Interacts with CCDC62 in the presence of estradiol/E2; this interaction seems to enhance the transcription of target genes. Interacts with DNAAF4. Interacts with PRMT2. Interacts with CCAR2 (via N-terminus) in a ligand-independent manner. Interacts with RBM39, in the presence of estradiol (E2). Interacts with STUB1/CHIP. In terms of processing, phosphorylation at Ser-87 and Ser-105 recruits NCOA1.

It localises to the nucleus. Nuclear hormone receptor. Binds estrogens with an affinity similar to that of ESR1/ER-alpha, and activates expression of reporter genes containing estrogen response elements (ERE) in an estrogen-dependent manner. The polypeptide is Estrogen receptor beta (ESR2) (Callithrix jacchus (White-tufted-ear marmoset)).